We begin with the raw amino-acid sequence, 240 residues long: Mitochondrial transcription rescue factor 1 (240 aa).

A mitochondrion-targeting transit peptide spans 1–83 (MAVPGVRLLT…ECYFPFSIRL (83 aa)). A disordered region spans residues 92–127 (STKKTLQKEADEEDSDEETSYPERSEQEEELESEPG). The segment covering 101–124 (ADEEDSDEETSYPERSEQEEELES) has biased composition (acidic residues). Phosphoserine occurs at positions 106 and 116. One can recognise an S4 RNA-binding domain in the interval 142-217 (FRYDVILKTG…LKKVYEEKTE (76 aa)).

In terms of assembly, monomer. Interacts with POLRMT. Interacts (via S4 domain) with MTRFR (via C-terminus). Associates with mitoribosomal S39 large subunit, peptidyl tRNA and nascent chain.

Its subcellular location is the mitochondrion matrix. Functionally, mitochondrial RNA-binding protein involved in mitochondrial transcription regulation. Functions as a protective factor to maintain proper mitochondrial RNA level during stress. Acts at the transcription level and its protective function depends on its RNA binding ability. Part of a mitoribosome-associated quality control pathway that prevents aberrant translation by responding to interruptions during elongation. As heterodimer with MTRF, ejects the unfinished nascent chain and peptidyl transfer RNA (tRNA), respectively, from stalled ribosomes. Recruitment of mitoribosome biogenesis factors to these quality control intermediates suggests additional roles for MTRES1 and MTRF during mitoribosome rescue. In Mus musculus (Mouse), this protein is Mitochondrial transcription rescue factor 1 (Mtres1).